The sequence spans 211 residues: Ribosomal RNA small subunit methyltransferase G (211 aa).

Residues Gly74, Leu79, 125–126, and Arg140 contribute to the S-adenosyl-L-methionine site; that span reads AE.

It belongs to the methyltransferase superfamily. RNA methyltransferase RsmG family.

Its subcellular location is the cytoplasm. In terms of biological role, specifically methylates the N7 position of guanine in position 518 of 16S rRNA. This is Ribosomal RNA small subunit methyltransferase G from Clavibacter michiganensis subsp. michiganensis (strain NCPPB 382).